The chain runs to 85 residues: U4-theraphotoxin-Hhn1ab (85 aa).

The first 22 residues, Met1–Ala22, serve as a signal peptide directing secretion. The propeptide occupies Glu23–Arg48. Disulfide bonds link Cys56–Cys77 and Cys71–Cys82.

Belongs to the neurotoxin 12 (Hwtx-2) family. 02 (Hwtx-2) subfamily. Expressed by the venom gland.

It is found in the secreted. Functionally, postsynaptic neurotoxin. The polypeptide is U4-theraphotoxin-Hhn1ab (Cyriopagopus hainanus (Chinese bird spider)).